A 61-amino-acid polypeptide reads, in one-letter code: Large ribosomal subunit protein uL30 (61 aa).

This sequence belongs to the universal ribosomal protein uL30 family. In terms of assembly, part of the 50S ribosomal subunit.

This is Large ribosomal subunit protein uL30 from Corynebacterium urealyticum (strain ATCC 43042 / DSM 7109).